The sequence spans 207 residues: Phosphoenolpyruvate guanylyltransferase (207 aa).

3 residues coordinate phosphoenolpyruvate: threonine 137, glycine 153, and serine 156.

This sequence belongs to the CofC family.

The enzyme catalyses phosphoenolpyruvate + GTP + H(+) = enolpyruvoyl-2-diphospho-5'-guanosine + diphosphate. It participates in cofactor biosynthesis; coenzyme F420 biosynthesis. In terms of biological role, guanylyltransferase that catalyzes the activation of phosphoenolpyruvate (PEP) as enolpyruvoyl-2-diphospho-5'-guanosine, via the condensation of PEP with GTP. It is involved in the biosynthesis of coenzyme F420, a hydride carrier cofactor. The protein is Phosphoenolpyruvate guanylyltransferase of Sphaerobacter thermophilus (strain ATCC 49802 / DSM 20745 / KCCM 41009 / NCIMB 13125 / S 6022).